Reading from the N-terminus, the 378-residue chain is RIB43A-like with coiled-coils protein 1 (378 aa).

Coiled-coil stretches lie at residues 153-250 (RMQQ…VTSD) and 279-334 (EQRA…CAEF).

It belongs to the RIB43A family. As to quaternary structure, microtubule inner protein component of sperm flagellar doublet microtubules.

It localises to the cytoplasm. It is found in the cytoskeleton. The protein resides in the flagellum axoneme. The protein is RIB43A-like with coiled-coils protein 1 (Ribc1) of Rattus norvegicus (Rat).